The chain runs to 140 residues: Large ribosomal subunit protein uL13 (140 aa).

This sequence belongs to the universal ribosomal protein uL13 family. In terms of assembly, part of the 50S ribosomal subunit.

Functionally, this protein is one of the early assembly proteins of the 50S ribosomal subunit, although it is not seen to bind rRNA by itself. It is important during the early stages of 50S assembly. This Methanosarcina mazei (strain ATCC BAA-159 / DSM 3647 / Goe1 / Go1 / JCM 11833 / OCM 88) (Methanosarcina frisia) protein is Large ribosomal subunit protein uL13.